Consider the following 150-residue polypeptide: Protein U1 (150 aa).

Belongs to the nanovirus U1 protein family.

The polypeptide is Protein U1 (DNA-U1) (Astragalus sinicus (Chinese milk vetch)).